The sequence spans 764 residues: Protein FAR1-RELATED SEQUENCE 7 (764 aa).

The region spanning 42–118 (DYYNSYATRT…QKEHNHDLGG (77 aa)) is the FAR1 1 domain. The segment at 119–144 (HIEEAQTTPRPSVQQRAPAPTKLGIS) is disordered. The segment covering 123 to 133 (AQTTPRPSVQQ) has biased composition (polar residues). The FAR1 2 domain maps to 204 to 280 (QFYQAYAEVV…NKDHNHDLEP (77 aa)). In terms of domain architecture, MULE spans 375 to 471 (AVVFDTSYRK…SAWQIRSKER (97 aa)). The SWIM-type zinc-finger motif lies at 650–686 (HAVTFSASNLNASCSCQMFEYEGLLCRHILKVFNLLD).

The protein belongs to the FHY3/FAR1 family. In terms of tissue distribution, expressed in hypocotyls, rosette and cauline leaves, inflorescences stems, flowers and siliques.

The protein localises to the nucleus. Functionally, putative transcription activator involved in regulating light control of development. The polypeptide is Protein FAR1-RELATED SEQUENCE 7 (FRS7) (Arabidopsis thaliana (Mouse-ear cress)).